The chain runs to 762 residues: Ribosome-releasing factor 2, mitochondrial (762 aa).

The transit peptide at 1 to 35 (MLLSLTFPVLRGCTGHLVNRSLQAPRWRVTWKRSY) directs the protein to the mitochondrion. The 288-residue stretch at 54–341 (SKIRNIGIMA…AITAYLPAPN (288 aa)) folds into the tr-type G domain. GTP contacts are provided by residues 63-70 (AHIDAGKT), 127-131 (DTPGH), and 181-184 (NKMD).

This sequence belongs to the TRAFAC class translation factor GTPase superfamily. Classic translation factor GTPase family. EF-G/EF-2 subfamily.

It is found in the mitochondrion. The catalysed reaction is GTP + H2O = GDP + phosphate + H(+). Its function is as follows. Mitochondrial GTPase that mediates the disassembly of ribosomes from messenger RNA at the termination of mitochondrial protein biosynthesis. Acts in collaboration with mrrf. GTP hydrolysis follows the ribosome disassembly and probably occurs on the ribosome large subunit. Not involved in the GTP-dependent ribosomal translocation step during translation elongation. This is Ribosome-releasing factor 2, mitochondrial (gfm2) from Danio rerio (Zebrafish).